Consider the following 246-residue polypeptide: MRRRPAQLTATKLADEEVPELTLVPDGVSRWTGADLDALRNAARRGGAEAAQQDLERKLCRTIDILGARSQQAQEINTVLTSVARLRENSTFRLYLLTQNHRGVGILKVGVKKLFVTHPVTCGLVEVDPLCVLDFYVDESCQRQGYGKTLYSHMLKAEHVSRPEVLAIDRPSNKLLGFLRKHYGLAAYTPQVNNFVVFHSFFDHTTVSERGKLLRAPSPARALPFSSSTNATAAIGGAKAKNWAPG.

An N-acetyltransferase domain is found at 21 to 202 (LTLVPDGVSR…NNFVVFHSFF (182 aa)). Acetyl-CoA is bound by residues 135–148 (FYVD…GYGK) and 172–181 (SNKLLGFLRK).

The protein belongs to the acetyltransferase ATAT1 family.

The catalysed reaction is L-lysyl-[alpha-tubulin] + acetyl-CoA = N(6)-acetyl-L-lysyl-[alpha-tubulin] + CoA + H(+). Functionally, specifically acetylates 'Lys-40' in alpha-tubulin on the lumenal side of microtubules. Promotes microtubule destabilization and accelerates microtubule dynamics; this activity may be independent of acetylation activity. Acetylates alpha-tubulin with a slow enzymatic rate, due to a catalytic site that is not optimized for acetyl transfer. Enters the microtubule through each end and diffuses quickly throughout the lumen of microtubules. Acetylates only long/old microtubules because of its slow acetylation rate since it does not have time to act on dynamically unstable microtubules before the enzyme is released. The sequence is that of Alpha-tubulin N-acetyltransferase from Leishmania infantum.